The sequence spans 315 residues: tRNA dimethylallyltransferase (315 aa).

Position 13–20 (13–20) interacts with ATP; it reads GPTASGKT. Substrate is bound at residue 15–20; the sequence is TASGKT. Interaction with substrate tRNA stretches follow at residues 38–41, 162–166, 243–248, and 276–283; these read DSAL, QRLSR, RCVGYR, and KRQITWLR.

The protein belongs to the IPP transferase family. In terms of assembly, monomer. It depends on Mg(2+) as a cofactor.

It carries out the reaction adenosine(37) in tRNA + dimethylallyl diphosphate = N(6)-dimethylallyladenosine(37) in tRNA + diphosphate. Catalyzes the transfer of a dimethylallyl group onto the adenine at position 37 in tRNAs that read codons beginning with uridine, leading to the formation of N6-(dimethylallyl)adenosine (i(6)A). This is tRNA dimethylallyltransferase from Vibrio vulnificus (strain YJ016).